Reading from the N-terminus, the 515-residue chain is Bifunctional solanapyrone synthase (515 aa).

Residues 1 to 25 (MRLIILNLLSLGITPSVVGHSGPHR) form the signal peptide. An N-linked (GlcNAc...) asparagine glycan is attached at asparagine 66. The FAD-binding PCMH-type domain occupies 91–261 (APKNPACIYT…THIVQRTYPL (171 aa)). Histidine 128 carries the pros-8alpha-FAD histidine modification. N-linked (GlcNAc...) asparagine glycosylation is found at asparagine 274 and asparagine 355.

The protein belongs to the oxygen-dependent FAD-linked oxidoreductase family. Requires FAD as cofactor.

It carries out the reaction prosolanapyrone II + O2 = prosolanapyrone III + H2O2. The catalysed reaction is prosolanapyrone III = (-)-solanapyrone A. It catalyses the reaction prosolanapyrone III = solanapyrone D. The protein operates within phytotoxin biosynthesis. Its function is as follows. Bifunctional solanapyrone synthase; part of the gene cluster that mediates the biosynthesis of the phytotoxin solanapyrone, a causal agent of early blight disease of potato and tomato. The prosolanapyrone synthase sol1 is a polyketide synthase that produces the octaketide desmethylprosolanapyrone I via sequential condensations of 7 malonyl-CoA units with one acetyl-CoA unit, and one methylation step. The octaketide backbone is further methylated by the sol2 O-methyltransferase to yield prosolanapyrone I. Prosolanapyrone I is hydroxylated to prosolanapyrone II by the cytochrome P450 monooxygenase sol6. The solanapyrone synthase sol5 then catalyzes the oxidation of prosolanapyrone II and the subsequent Diels Alder cycloisomerization of the product prosolanapyrone III to solanapyrones A and D. Solanapyrones A and D are then converted into solanapyrones B and E, respectively, by the sol3 dehydrogenase. In Alternaria solani, this protein is Bifunctional solanapyrone synthase (sol5).